We begin with the raw amino-acid sequence, 517 residues long: Cytochrome P450 monooxygenase 124 (517 aa).

The helical transmembrane segment at 3–23 threads the bilayer; sequence SLLVLFVSLLALGALKKHLDF. A heme-binding site is contributed by C453.

It belongs to the cytochrome P450 family. Heme serves as cofactor.

The protein resides in the membrane. The protein operates within secondary metabolite biosynthesis. Its function is as follows. Cytochrome P450 monooxygenase that is able to use trans-stilbene as a substrate for oxidation. This Postia placenta (strain ATCC 44394 / Madison 698-R) (Brown rot fungus) protein is Cytochrome P450 monooxygenase 124.